The following is a 264-amino-acid chain: Apolipoprotein A-I (264 aa).

Residues 1–18 (MKAVVLAVAVLFLTGSQA) form the signal peptide. 2 tandem repeats follow at residues 67–88 (LKLL…ADLG) and 89–110 (PVTQ…QEMN). Positions 67-264 (LKLLDNWDTL…DQATKQLTAQ (198 aa)) are 10 X approximate tandem repeats. Met109 is subject to Methionine sulfoxide. The 3; half-length repeat unit spans residues 111–121 (KDLQEVKQKVQ). 5 tandem repeats follow at residues 122–143 (PYLD…EKVG), 144–165 (PLGT…EKLT), 166–187 (PLGE…TQLA), 188–207 (PYSD…LRDS), and 208–229 (TTFA…EKAK). One copy of the 9; half-length repeat lies at 230–240 (PALEDLRQGLL). Copy 10 of the repeat occupies 241–264 (PVLESLKASILSSIDQATKQLTAQ).

The protein belongs to the apolipoprotein A1/A4/E family. Homodimer. Interacts with APOA1BP and CLU. Component of a sperm activating protein complex (SPAP), consisting of APOA1, an immunoglobulin heavy chain, an immunoglobulin light chain and albumin. Interacts with NDRG1. Interacts with SCGB3A2. Interacts with NAXE and YJEFN3. Glycosylated. In terms of processing, palmitoylated. Post-translationally, phosphorylation sites are present in the extracellular medium.

The protein resides in the secreted. Participates in the reverse transport of cholesterol from tissues to the liver for excretion by promoting cholesterol efflux from tissues and by acting as a cofactor for the lecithin cholesterol acyltransferase (LCAT). As part of the SPAP complex, activates spermatozoa motility. This Chinchilla lanigera (Long-tailed chinchilla) protein is Apolipoprotein A-I (APOA1).